Reading from the N-terminus, the 747-residue chain is Mediator of RNA polymerase II transcription subunit 25 (747 aa).

The interaction with the Mediator complex stretch occupies residues 1–226 (MVPGSEGPAR…PRHMVLVRGL (226 aa)). Disordered regions lie at residues 233-274 (GSAP…QYQV) and 299-390 (LGPR…PALG). 2 stretches are compositionally biased toward pro residues: residues 263 to 272 (QPLPPVPPQY) and 326 to 342 (PQLP…PPAS). The segment at 389-543 (LGGQQSVSNK…VNGIRQVITN (155 aa)) is interaction with VP16. An interaction with CREBBP region spans residues 395 to 545 (VSNKLLAWSG…GIRQVITNHK (151 aa)). A disordered region spans residues 548–747 (QQQKLEQQQR…MEDDILMDLI (200 aa)). 2 interaction with RARA regions span residues 564 to 653 (APPG…LLNP) and 640 to 707 (PGAN…WPAQ). Positions 598 to 611 (ASGATGQPQPQGTA) are enriched in low complexity. Residues 612–634 (QPPPGAPQGPPGAASGPPPPGPI) show a composition bias toward pro residues. An LXXLL motif motif is present at residues 646–650 (LRSLL). 3 stretches are compositionally biased toward pro residues: residues 652 to 664 (NPPP…PPPQ), 673 to 683 (PGAPALLPPPH), and 691 to 713 (LGPP…PRAP). R725 carries the post-translational modification Asymmetric dimethylarginine. A compositionally biased stretch (acidic residues) spans 738–747 (MEDDILMDLI).

It belongs to the Mediator complex subunit 25 family. In terms of assembly, component of the Mediator complex, which is composed of MED1, MED4, MED6, MED7, MED8, MED9, MED10, MED11, MED12, MED13, MED13L, MED14, MED15, MED16, MED17, MED18, MED19, MED20, MED21, MED22, MED23, MED24, MED25, MED26, MED27, MED29, MED30, MED31, CCNC, CDK8 and CDC2L6/CDK11. The MED12, MED13, CCNC and CDK8 subunits form a distinct module termed the CDK8 module. Mediator containing the CDK8 module is less active than Mediator lacking this module in supporting transcriptional activation. Individual preparations of the Mediator complex lacking one or more distinct subunits have been variously termed ARC, CRSP, DRIP, PC2, SMCC and TRAP. Interacts with CREBBP. Interacts with ESR1, GR, RARA, RXRA and THRB in a ligand-dependent fashion. Binds the Herpes simplex virus activator VP16. Ubiquitously expressed. Highest levels in brain, heart, kidney, peripheral leukocytes, placenta, skeletal muscle and spleen.

The protein resides in the nucleus. Its function is as follows. Component of the Mediator complex, a coactivator involved in the regulated transcription of nearly all RNA polymerase II-dependent genes. Mediator functions as a bridge to convey information from gene-specific regulatory proteins to the basal RNA polymerase II transcription machinery. Mediator is recruited to promoters by direct interactions with regulatory proteins and serves as a scaffold for the assembly of a functional preinitiation complex with RNA polymerase II and the general transcription factors. Required for RARA/RXRA-mediated transcription. This chain is Mediator of RNA polymerase II transcription subunit 25 (MED25), found in Homo sapiens (Human).